Here is a 221-residue protein sequence, read N- to C-terminus: GTP cyclohydrolase 1 (221 aa).

Zn(2+) is bound by residues C109, H112, and C180.

Belongs to the GTP cyclohydrolase I family. In terms of assembly, toroid-shaped homodecamer, composed of two pentamers of five dimers.

The enzyme catalyses GTP + H2O = 7,8-dihydroneopterin 3'-triphosphate + formate + H(+). It functions in the pathway cofactor biosynthesis; 7,8-dihydroneopterin triphosphate biosynthesis; 7,8-dihydroneopterin triphosphate from GTP: step 1/1. This Blochmanniella pennsylvanica (strain BPEN) protein is GTP cyclohydrolase 1.